The chain runs to 303 residues: Eukaryotic translation initiation factor 3 subunit G (303 aa).

The segment at 1-38 (MATQTKHDWADDEDLEETTTTTAPTTDLPPPQKIQNKD) is disordered. The 79-residue stretch at 223-301 (ATLRVTNVSE…LILRVEFAKK (79 aa)) folds into the RRM domain.

It belongs to the eIF-3 subunit G family. In terms of assembly, component of the eukaryotic translation initiation factor 3 (eIF-3) complex.

It is found in the cytoplasm. In terms of biological role, RNA-binding component of the eukaryotic translation initiation factor 3 (eIF-3) complex, which is involved in protein synthesis of a specialized repertoire of mRNAs and, together with other initiation factors, stimulates binding of mRNA and methionyl-tRNAi to the 40S ribosome. The eIF-3 complex specifically targets and initiates translation of a subset of mRNAs involved in cell proliferation. This subunit can bind 18S rRNA. The polypeptide is Eukaryotic translation initiation factor 3 subunit G (Chaetomium globosum (strain ATCC 6205 / CBS 148.51 / DSM 1962 / NBRC 6347 / NRRL 1970) (Soil fungus)).